The sequence spans 230 residues: Thymidylate kinase (230 aa).

ATP is bound at residue 20–27; that stretch reads GGEGSGKS.

The protein belongs to the thymidylate kinase family.

It catalyses the reaction dTMP + ATP = dTDP + ADP. In terms of biological role, phosphorylation of dTMP to form dTDP in both de novo and salvage pathways of dTTP synthesis. In Nitrobacter winogradskyi (strain ATCC 25391 / DSM 10237 / CIP 104748 / NCIMB 11846 / Nb-255), this protein is Thymidylate kinase.